Reading from the N-terminus, the 92-residue chain is Probable Fe(2+)-trafficking protein (92 aa).

The protein belongs to the Fe(2+)-trafficking protein family.

Its function is as follows. Could be a mediator in iron transactions between iron acquisition and iron-requiring processes, such as synthesis and/or repair of Fe-S clusters in biosynthetic enzymes. In Shewanella baltica (strain OS223), this protein is Probable Fe(2+)-trafficking protein.